The following is a 417-amino-acid chain: Phosphoglycerate kinase 1 (417 aa).

At Ser2 the chain carries N-acetylserine. Phosphoserine is present on residues Ser2 and Ser4. Lys6 carries the N6-succinyllysine modification. The residue at position 11 (Lys11) is an N6-acetyllysine. Residues Val23, Asp24, Phe25, Asn26, Gln38, Arg39, Ser62, His63, Gly65, and Arg66 each contribute to the (2R)-3-phosphoglycerate site. A mitochondrial targeting region exposed following cis-trans isomerization by PIN1 and recognized by the TOM complex for mitochondrial translocation of the protein region spans residues 38 to 43 (QRIKAA). Position 75 is an N6-acetyllysine (Lys75). A Phosphotyrosine modification is found at Tyr76. Residues Lys86 and Lys91 each carry the N6-acetyllysine modification. Residue Lys97 is modified to N6-(2-hydroxyisobutyryl)lysine; alternate. Lys97 carries the post-translational modification N6-acetyllysine; alternate. Leu122 and Arg123 together coordinate (2R)-3-phosphoglycerate. Lys131 is modified (N6-acetyllysine; alternate). At Lys131 the chain carries N6-malonyllysine; alternate. Lys146 is subject to N6-acetyllysine. Residues His170 and Arg171 each contribute to the (2R)-3-phosphoglycerate site. The residue at position 191 (Lys191) is an N6-succinyllysine. Residue Tyr196 is modified to Phosphotyrosine. Position 199 is an N6-acetyllysine (Lys199). At Ser203 the chain carries Phosphoserine. Gly214 provides a ligand contact to ADP. Gly214 contacts CDP. The AMP site is built by Ala215 and Lys216. An ATP-binding site is contributed by Ala215. Ala215 serves as a coordination point for Mg(2+). Position 216 is an N6-(2-hydroxyisobutyryl)lysine (Lys216). Mg(2+) is bound by residues Ala218 and Asp219. Residue Asp219 participates in CDP binding. Lys220 contacts AMP. Lys220 is an ATP binding site. An N6-(2-hydroxyisobutyryl)lysine modification is found at Lys220. Gly238 provides a ligand contact to ADP. Gly238 provides a ligand contact to CDP. Gly239 is a binding site for AMP. An ATP-binding site is contributed by Gly239. N6-acetyllysine occurs at positions 267 and 291. Gly313 contributes to the AMP binding site. Gly313 provides a ligand contact to ATP. Lys323 is subject to N6-(2-hydroxyisobutyryl)lysine. The CDP site is built by Gly338, Val340, and Phe343. Position 343 (Phe343) interacts with ADP. Glu344 is an AMP binding site. ATP is bound by residues Glu344, Asp375, and Thr376. Asp375 provides a ligand contact to Mg(2+).

It belongs to the phosphoglycerate kinase family. Monomer. Interacts with kinase MAPK1/ERK2; the interaction is direct, occurs under hypoxic conditions, and promotes its interaction with PIN1. Interacts with peptidyl-prolyl cis-trans isomerase PIN1; the interaction is direct, occurs under hypoxic conditions, and targets the protein to the mitochondrion by promoting interactions with the TOM complex. Interacts with mitochondrial circRNA mcPGK1 (via its 2nd stem-loop); the interaction is direct and targets the protein to the mitochondrion by promoting interactions with the TOM complex. Interacts with pyruvate dehydrogenase kinase PDK1; the interaction is direct, occurs under hypoxic conditions and leads to PDK1-mediated inhibition of pyruvate dehydrogenase complex activity. Requires Mg(2+) as cofactor. Post-translationally, phosphorylated at Ser-203 by MAPK1/ERK2 under hypoxic conditions, which promotes its mitochondrial targeting.

It is found in the cytoplasm. The protein localises to the cytosol. Its subcellular location is the mitochondrion matrix. The enzyme catalyses (2R)-3-phosphoglycerate + ATP = (2R)-3-phospho-glyceroyl phosphate + ADP. It carries out the reaction L-seryl-[protein] + ATP = O-phospho-L-seryl-[protein] + ADP + H(+). Its pathway is carbohydrate degradation; glycolysis; pyruvate from D-glyceraldehyde 3-phosphate: step 2/5. Its function is as follows. Catalyzes one of the two ATP producing reactions in the glycolytic pathway via the reversible conversion of 1,3-diphosphoglycerate to 3-phosphoglycerate. Both L- and D- forms of purine and pyrimidine nucleotides can be used as substrates, but the activity is much lower on pyrimidines. In addition to its role as a glycolytic enzyme, it seems that PGK-1 acts as a polymerase alpha cofactor protein (primer recognition protein). Acts as a protein kinase when localized to the mitochondrion where it phosphorylates pyruvate dehydrogenase kinase PDK1 to inhibit pyruvate dehydrogenase complex activity and suppress the formation of acetyl-coenzyme A from pyruvate, and consequently inhibit oxidative phosphorylation and promote glycolysis. May play a role in sperm motility. This Notamacropus eugenii (Tammar wallaby) protein is Phosphoglycerate kinase 1 (PGK1).